The chain runs to 91 residues: MKFIVGLLLVLLLALQYQLWISKDGLGELRQLSRSIKQQRHENATLIERNQVLKAEVQDLKSGLDALEERARSGLGMIKQGETFFQVVEEP.

Over 1–3 (MKF) the chain is Cytoplasmic. A helical transmembrane segment spans residues 4–21 (IVGLLLVLLLALQYQLWI). At 22-91 (SKDGLGELRQ…ETFFQVVEEP (70 aa)) the chain is on the periplasmic side. Residues 26–74 (LGELRQLSRSIKQQRHENATLIERNQVLKAEVQDLKSGLDALEERARSG) adopt a coiled-coil conformation.

This sequence belongs to the FtsB family. As to quaternary structure, part of a complex composed of FtsB, FtsL and FtsQ.

The protein localises to the cell inner membrane. Its function is as follows. Essential cell division protein. May link together the upstream cell division proteins, which are predominantly cytoplasmic, with the downstream cell division proteins, which are predominantly periplasmic. The sequence is that of Cell division protein FtsB from Nitrosococcus oceani (strain ATCC 19707 / BCRC 17464 / JCM 30415 / NCIMB 11848 / C-107).